The primary structure comprises 316 residues: Tyrosine recombinase XerD (316 aa).

Residues 4-97 (AALQTQLQGY…AVRGLHRFAV (94 aa)) enclose the Core-binding (CB) domain. A Tyr recombinase domain is found at 118 to 309 (RLPKSLTVDE…TVQALREVWA (192 aa)). Catalysis depends on residues Arg-162, Lys-186, His-261, Arg-264, and His-287. The active-site O-(3'-phospho-DNA)-tyrosine intermediate is Tyr-296.

This sequence belongs to the 'phage' integrase family. XerD subfamily. Forms a cyclic heterotetrameric complex composed of two molecules of XerC and two molecules of XerD.

It is found in the cytoplasm. In terms of biological role, site-specific tyrosine recombinase, which acts by catalyzing the cutting and rejoining of the recombining DNA molecules. The XerC-XerD complex is essential to convert dimers of the bacterial chromosome into monomers to permit their segregation at cell division. It also contributes to the segregational stability of plasmids. The sequence is that of Tyrosine recombinase XerD from Mycobacterium leprae (strain TN).